A 393-amino-acid chain; its full sequence is uncharacterized protein (393 aa).

A Flavodoxin-like domain is found at 250–389; the sequence is AVIVYDTMYN…KCYEFGKRLA (140 aa).

This is an uncharacterized protein from Methanocaldococcus jannaschii (strain ATCC 43067 / DSM 2661 / JAL-1 / JCM 10045 / NBRC 100440) (Methanococcus jannaschii).